The sequence spans 324 residues: Esterase FPSE_08126 (324 aa).

Residues Ser-156, Asp-255, and His-285 contribute to the active site.

This sequence belongs to the AB hydrolase 3 family.

Functionally, esterase; part of the Fusarium detoxification of benzoxazolinone cluster involved in the degradation of benzoxazolinones produced by the host plant. Maize, wheat, and rye produce the 2 benzoxazinone phytoanticipins 2,4-dihy-droxy-7-methoxy-1,4-benzoxazin-3-one (DIMBOA) and 2,4-dihydroxy-1,4-benzoxazin-3-one (DIBOA) that, due to their inherent instability once released, spontaneously degrade to the more stable corresponding benzoxazolinones, 6-methoxy-2-benzoxazolinone (MBOA) and 2-benzoxazolinone (BOA), respectively. The first step in the detoxification of benzoxazolinones involves the hydrolysis of the cyclic ester bond of benzoxazolinones by the gamma-lactamase FDB1 to aminophenols. FDB1 is able to convert 2-benzoxazolinone (BOA) into 2-aminophenol (2-AP), as well as 6-methoxy-2-benzoxazolinone (MBOA) into 5-methoxy-2-aminophenol (2-AMP). The N-malonyltransferase FDB2 then metabolizes aminophenols via N-malonylation to non-toxic malonamic acids. FDB2 converts 2-AP into N-(2-hydroxyphenyl) malonamic acid (HPMA) and 2-AMP into N-(2-hydroxy-4-methoxyphenyl) malonamic acid (HMPMA). The cluster also contains 2 transcription factors (FDB3 and FPSE_08121), an aldo-keto reductase (FPSE_08125) that possibly associates with a ketone component of BOA and MBOA degradation, an esterase (FPSE_08126), an acyl-CoA transferase (FPSE_08120), a solute carrier protein (FPSE_08119) and a transmembrane transporter (FPSE_08127) proposed to shuttle metabolites of benzoxazolinone degradation. This is Esterase FPSE_08126 from Fusarium pseudograminearum (strain CS3096) (Wheat and barley crown-rot fungus).